We begin with the raw amino-acid sequence, 458 residues long: LysM domain-containing protein ARB_05157 (458 aa).

The N-terminal stretch at 1–19 (MVSLKVCFLLLASSELAFG) is a signal peptide. A LysM 1 domain is found at 157–203 (AFHLVKQGEDCGTISATYGITSAQFLAWNPSAGKDCTGLWANAYACV). A disordered region spans residues 210–232 (PPKTTSQAPQPTPTKPSNGIETP). Positions 212–229 (KTTSQAPQPTPTKPSNGI) are enriched in polar residues. 3 LysM domains span residues 245–291 (KFHL…YACV), 325–371 (KFYL…YSCV), and 409–455 (KFHF…YLCV).

Its subcellular location is the secreted. In terms of biological role, might have a role in sequestration of chitin oligosaccharides (breakdown products of fungal cell walls that are released during invasion and act as triggers of host immunity) to dampen host defense. The chain is LysM domain-containing protein ARB_05157 from Arthroderma benhamiae (strain ATCC MYA-4681 / CBS 112371) (Trichophyton mentagrophytes).